The sequence spans 239 residues: Ribonuclease 3 (239 aa).

An RNase III domain is found at 12–137 (RAKLEGLIGH…LIAAIYLDGG (126 aa)). A Mg(2+)-binding site is contributed by glutamate 50. Residue aspartate 54 is part of the active site. Mg(2+) contacts are provided by aspartate 123 and glutamate 126. The active site involves glutamate 126. The DRBM domain occupies 162–231 (DAKTELQEWS…ATKMLEREGI (70 aa)).

Belongs to the ribonuclease III family. As to quaternary structure, homodimer. It depends on Mg(2+) as a cofactor.

The protein resides in the cytoplasm. The catalysed reaction is Endonucleolytic cleavage to 5'-phosphomonoester.. Its function is as follows. Digests double-stranded RNA. Involved in the processing of primary rRNA transcript to yield the immediate precursors to the large and small rRNAs (23S and 16S). Processes some mRNAs, and tRNAs when they are encoded in the rRNA operon. Processes pre-crRNA and tracrRNA of type II CRISPR loci if present in the organism. This is Ribonuclease 3 from Rhizobium johnstonii (strain DSM 114642 / LMG 32736 / 3841) (Rhizobium leguminosarum bv. viciae).